The sequence spans 102 residues: Small ribosomal subunit protein uS10 (102 aa).

Belongs to the universal ribosomal protein uS10 family. As to quaternary structure, part of the 30S ribosomal subunit.

In terms of biological role, involved in the binding of tRNA to the ribosomes. The protein is Small ribosomal subunit protein uS10 of Lactobacillus delbrueckii subsp. bulgaricus (strain ATCC 11842 / DSM 20081 / BCRC 10696 / JCM 1002 / NBRC 13953 / NCIMB 11778 / NCTC 12712 / WDCM 00102 / Lb 14).